The chain runs to 335 residues: Mevalonate kinase (335 aa).

111 to 121 (PVGAGLGSSAA) is an ATP binding site. The active-site Proton acceptor is the Asp-162.

It belongs to the GHMP kinase family. Mevalonate kinase subfamily. Homodimer. The cofactor is Mg(2+).

The protein localises to the cytoplasm. It catalyses the reaction (R)-mevalonate + ATP = (R)-5-phosphomevalonate + ADP + H(+). The protein operates within isoprenoid biosynthesis; isopentenyl diphosphate biosynthesis via mevalonate pathway; isopentenyl diphosphate from (R)-mevalonate: step 1/3. In terms of biological role, catalyzes the phosphorylation of (R)-mevalonate (MVA) to (R)-mevalonate 5-phosphate (MVAP). Functions in the mevalonate (MVA) pathway leading to isopentenyl diphosphate (IPP), a key precursor for the biosynthesis of isoprenoid compounds such as archaeal membrane lipids. In Pyrococcus horikoshii (strain ATCC 700860 / DSM 12428 / JCM 9974 / NBRC 100139 / OT-3), this protein is Mevalonate kinase.